The chain runs to 275 residues: tRNA-splicing endonuclease subunit SEN34 (275 aa).

Active-site residues include Tyr209, His217, and Lys250.

This sequence belongs to the tRNA-intron endonuclease family. Heterotetramer composed of SEN2, SEN15, SEN34 and SEN54. Interacts directly with SEN15.

It is found in the nucleus. The protein localises to the endomembrane system. It localises to the mitochondrion outer membrane. The catalysed reaction is pretRNA = a 3'-half-tRNA molecule with a 5'-OH end + a 5'-half-tRNA molecule with a 2',3'-cyclic phosphate end + an intron with a 2',3'-cyclic phosphate and a 5'-hydroxyl terminus.. Functionally, constitutes one of the two catalytic subunit of the tRNA-splicing endonuclease complex, a complex responsible for identification and cleavage of the splice sites in pre-tRNA. It cleaves pre-tRNA at the 5'- and 3'-splice sites to release the intron. The products are an intron and two tRNA half-molecules bearing 2',3'-cyclic phosphate and 5'-OH termini. There are no conserved sequences at the splice sites, but the intron is invariably located at the same site in the gene, placing the splice sites an invariant distance from the constant structural features of the tRNA body. It probably carries the active site for 3'-splice site cleavage. This is tRNA-splicing endonuclease subunit SEN34 (SEN34) from Saccharomyces cerevisiae (strain ATCC 204508 / S288c) (Baker's yeast).